Consider the following 110-residue polypeptide: uncharacterized protein (110 aa).

Basic and acidic residues predominate over residues 1–16 (MSVKLKYDKIDQRNGD). 2 disordered regions span residues 1–29 (MSVK…GNGN) and 73–100 (IKQQ…ESPN). Low complexity predominate over residues 20–29 (GNHNNCGNGN).

This is an uncharacterized protein from Dictyostelium discoideum (Social amoeba).